The primary structure comprises 295 residues: Manganese transport system membrane protein MntD (295 aa).

Transmembrane regions (helical) follow at residues 7–27 (IIAT…FLVL), 42–62 (LLGI…YMFI), 63–83 (GAAA…SKGV), 87–107 (AAIG…LSVY), 138–158 (IGPK…VLIS), 174–194 (ALAL…MLSL), 203–223 (VGAV…HLLT), 227–247 (LYML…GYFF), and 253–273 (VSIS…AFLF).

The protein belongs to the ABC-3 integral membrane protein family. The complex is probably composed of two ATP-binding proteins (MntB), two transmembrane proteins (MntC and MntD) and a solute-binding protein (MntA).

It is found in the cell membrane. Probably part of the ABC transporter complex MntABCD involved in manganese import. Probably responsible for the translocation of the substrate across the membrane. The polypeptide is Manganese transport system membrane protein MntD (Bacillus subtilis (strain 168)).